Reading from the N-terminus, the 391-residue chain is Transforming growth factor beta-1 proprotein (391 aa).

The N-terminal stretch at 1-18 is a signal peptide; that stretch reads MDPSPLLALLLLLGAARA. Residues 19–63 form a straightjacket domain region; that stretch reads LSTCQRLDLEAAKKKRIEAVRGQILSKLRLTAPPPASETPPRPLP. The arm domain stretch occupies residues 64–270; the sequence is DDVRALYNST…ALPAERANEL (207 aa). Asparagine 71, asparagine 126, and asparagine 171 each carry an N-linked (GlcNAc...) asparagine glycan. Residues 221-249 are bowtie tail; the sequence is EMGPGHADEMRISIEGFEQQRGDMQSIAK. The short motif at 241–243 is the Cell attachment site element; it reads RGD. Intrachain disulfides connect cysteine 284–cysteine 295, cysteine 294–cysteine 357, cysteine 323–cysteine 388, and cysteine 327–cysteine 390.

It belongs to the TGF-beta family. As to quaternary structure, latency-associated peptide: Homodimer; disulfide-linked. Latency-associated peptide: Interacts with Transforming growth factor beta-1 (TGF-beta-1) chain; interaction is non-covalent and maintains (TGF-beta-1) in a latent state; each Latency-associated peptide (LAP) monomer interacts with TGF-beta-1 in the other monomer. Transforming growth factor beta-1: Homodimer; disulfide-linked. Transforming growth factor beta-1: Interacts with TGF-beta receptors (TGFBR1 and TGFBR2), leading to signal transduction. In terms of processing, transforming growth factor beta-1 proprotein: The precursor proprotein is cleaved in the Golgi apparatus to form Transforming growth factor beta-1 (TGF-beta-1) and Latency-associated peptide (LAP) chains, which remain non-covalently linked, rendering TGF-beta-1 inactive.

It is found in the secreted. The protein localises to the extracellular space. It localises to the extracellular matrix. Transforming growth factor beta-1 proprotein: Precursor of the Latency-associated peptide (LAP) and Transforming growth factor beta-1 (TGF-beta-1) chains, which constitute the regulatory and active subunit of TGF-beta-1, respectively. Functionally, required to maintain the Transforming growth factor beta-1 (TGF-beta-1) chain in a latent state during storage in extracellular matrix. Associates non-covalently with TGF-beta-1 and regulates its activation via interaction with 'milieu molecules', such as LTBP1, LRRC32/GARP and LRRC33/NRROS, that control activation of TGF-beta-1. Interaction with integrins (ITGAV:ITGB6 or ITGAV:ITGB8) results in distortion of the Latency-associated peptide chain and subsequent release of the active TGF-beta-1. In terms of biological role, transforming growth factor beta-1: Multifunctional protein that regulates the growth and differentiation of various cell types and is involved in various processes, such as normal development, immune function, microglia function and responses to neurodegeneration. Activation into mature form follows different steps: following cleavage of the proprotein in the Golgi apparatus, Latency-associated peptide (LAP) and Transforming growth factor beta-1 (TGF-beta-1) chains remain non-covalently linked rendering TGF-beta-1 inactive during storage in extracellular matrix. At the same time, LAP chain interacts with 'milieu molecules', such as LTBP1, LRRC32/GARP and LRRC33/NRROS that control activation of TGF-beta-1 and maintain it in a latent state during storage in extracellular milieus. TGF-beta-1 is released from LAP by integrins (ITGAV:ITGB6 or ITGAV:ITGB8): integrin-binding to LAP stabilizes an alternative conformation of the LAP bowtie tail and results in distortion of the LAP chain and subsequent release of the active TGF-beta-1. Once activated following release of LAP, TGF-beta-1 acts by binding to TGF-beta receptors (TGFBR1 and TGFBR2), which transduce signal. While expressed by many cells types, TGF-beta-1 only has a very localized range of action within cell environment thanks to fine regulation of its activation by Latency-associated peptide chain (LAP) and 'milieu molecules'. Plays an important role in bone remodeling: acts as a potent stimulator of osteoblastic bone formation. Can promote either T-helper 17 cells (Th17) or regulatory T-cells (Treg) lineage differentiation in a concentration-dependent manner. Can induce epithelial-to-mesenchymal transition (EMT) and cell migration in various cell types. The polypeptide is Transforming growth factor beta-1 proprotein (TGFB1) (Gallus gallus (Chicken)).